The following is a 528-amino-acid chain: MTAQQLWQRYLDWLYYDPSLEFYLDISRMGFDDAFVTSMQPKFQHAFAAMAELEAGAIANPDEQRMVGHYWLRDPELAPTPELQTQIRDTLAAIQDFALKVHSGVLRPPTGSRFTDILSIGIGGSALGPQFVSEALRPQAALLQIHFFDNTDPAGFDRVLADLGDRLASTLVIVISKSGGTPETRNGMLEVQSAFAQRGIAFAPQAVAVTGVGSHLDHVAITERWLARFPMEDWVGGRTSELSAVGLLSAALLGIDITAMLAGARQMDALTRHSDLRQNPAALLALSWYWAGNGQGKKDMVILPYKDSLLLFSRYLQQLIMESLGKERDLLGKVVHQGIAVYGNKGSTDQHAYVQQLREGIPNFFATFIEVLEDRQGPSPVVEPGITSGDYLSGLLQGTRAALYENGRESITITVPRVDAQQVGALIALYERAVGLYASLVGINAYHQPGVEAGKKAAAGVLEIQRQIVELLQQGQPLSIAAIADDLGQSEQIETIYKILRHLEANQRGVQLTGDRHNPLSLIASWQR.

Residue Glu322 is the Proton donor of the active site. Residues His351 and Lys455 contribute to the active site.

It belongs to the GPI family.

The protein resides in the cytoplasm. The catalysed reaction is alpha-D-glucose 6-phosphate = beta-D-fructose 6-phosphate. Its pathway is carbohydrate biosynthesis; gluconeogenesis. The protein operates within carbohydrate degradation; glycolysis; D-glyceraldehyde 3-phosphate and glycerone phosphate from D-glucose: step 2/4. Catalyzes the reversible isomerization of glucose-6-phosphate to fructose-6-phosphate. This is Glucose-6-phosphate isomerase from Synechococcus elongatus (strain ATCC 33912 / PCC 7942 / FACHB-805) (Anacystis nidulans R2).